Here is a 263-residue protein sequence, read N- to C-terminus: Palmitoyltransferase ZDHHC22 (263 aa).

Residues 1–9 (MLALRLLNV) lie on the Cytoplasmic side of the membrane. A helical membrane pass occupies residues 10 to 30 (VAPAYFLCISLVTFVLQLFLF). At 31–48 (LPSMREDPAAARLFSPAL) the chain is on the lumenal side. Residues 49 to 69 (LHGALFLFLSANALGNYVLVI) traverse the membrane as a helical segment. Topologically, residues 70 to 125 (QNSPDDLGACQGASARKTPCPSPSTHFCRVCARVTLRHDHHCFFTGNCIGSRNMRN) are cytoplasmic. Positions 92-131 (PSTHFCRVCARVTLRHDHHCFFTGNCIGSRNMRNFVLFCL) constitute a DHHC domain. The active-site S-palmitoyl cysteine intermediate is C111. 2 helical membrane-spanning segments follow: residues 126–146 (FVLF…AGVA) and 147–167 (YISA…TLLP). Topologically, residues 168–182 (TSISQFFSGAVLGSE) are cytoplasmic. The helical transmembrane segment at 183–203 (MFVILMLYLWFAIGLACAGFC) threads the bilayer. Topologically, residues 204 to 263 (CHQLLLILRGQTRHQVRKGVAVRARPWRKNLQEVFGKRWLLGLLVPMFNVGSESSKQQDK) are lumenal.

It belongs to the DHHC palmitoyltransferase family. Interacts with CNN3. Widely expressed.

The protein localises to the endoplasmic reticulum membrane. Its subcellular location is the golgi apparatus membrane. The enzyme catalyses L-cysteinyl-[protein] + hexadecanoyl-CoA = S-hexadecanoyl-L-cysteinyl-[protein] + CoA. Functionally, palmitoyltransferase that could catalyze the addition of palmitate onto various protein substrates and be involved in a variety of cellular processes. Catalyzes the palmitoylation of KCNMA1, regulating localization of KCNMA1 to the plasma membrane. Might also mediate palmitoylation of CNN3. The polypeptide is Palmitoyltransferase ZDHHC22 (Homo sapiens (Human)).